A 430-amino-acid chain; its full sequence is Probable dual-specificity RNA methyltransferase RlmN (430 aa).

Residue Glu125 is the Proton acceptor of the active site. Residues 152 to 395 (RHGRVTLCVS…VTVRDTRGRE (244 aa)) form the Radical SAM core domain. Cys159 and Cys400 form a disulfide bridge. [4Fe-4S] cluster is bound by residues Cys166, Cys170, and Cys173. S-adenosyl-L-methionine-binding positions include 221–222 (GE), Ser255, 278–280 (SLH), and Asn357. Catalysis depends on Cys400, which acts as the S-methylcysteine intermediate.

This sequence belongs to the radical SAM superfamily. RlmN family. It depends on [4Fe-4S] cluster as a cofactor.

It is found in the cytoplasm. The enzyme catalyses adenosine(2503) in 23S rRNA + 2 reduced [2Fe-2S]-[ferredoxin] + 2 S-adenosyl-L-methionine = 2-methyladenosine(2503) in 23S rRNA + 5'-deoxyadenosine + L-methionine + 2 oxidized [2Fe-2S]-[ferredoxin] + S-adenosyl-L-homocysteine. The catalysed reaction is adenosine(37) in tRNA + 2 reduced [2Fe-2S]-[ferredoxin] + 2 S-adenosyl-L-methionine = 2-methyladenosine(37) in tRNA + 5'-deoxyadenosine + L-methionine + 2 oxidized [2Fe-2S]-[ferredoxin] + S-adenosyl-L-homocysteine. Its function is as follows. Specifically methylates position 2 of adenine 2503 in 23S rRNA and position 2 of adenine 37 in tRNAs. This chain is Probable dual-specificity RNA methyltransferase RlmN, found in Acidothermus cellulolyticus (strain ATCC 43068 / DSM 8971 / 11B).